A 173-amino-acid chain; its full sequence is Small ribosomal subunit protein uS5 (173 aa).

The S5 DRBM domain maps to 17 to 80 (WQERVIQIRR…ADGKKQLIEV (64 aa)).

It belongs to the universal ribosomal protein uS5 family. Part of the 30S ribosomal subunit. Contacts proteins S4 and S8.

Functionally, with S4 and S12 plays an important role in translational accuracy. Its function is as follows. Located at the back of the 30S subunit body where it stabilizes the conformation of the head with respect to the body. This chain is Small ribosomal subunit protein uS5, found in Microcystis aeruginosa (strain NIES-843 / IAM M-2473).